A 306-amino-acid chain; its full sequence is Putative HPr kinase/phosphorylase 2 (306 aa).

Catalysis depends on residues histidine 138 and lysine 159. 153-160 (GESGVGKS) is an ATP binding site. Serine 160 contacts Mg(2+). Aspartate 177 acts as the Proton acceptor; for phosphorylation activity. Proton donor; for dephosphorylation activity in catalysis. Residues 201–210 (LALRSVGLLN) are important for the catalytic mechanism of both phosphorylation and dephosphorylation. An important for the catalytic mechanism of dephosphorylation region spans residues 264–269 (QLQPGR).

It belongs to the HPrK/P family. As to quaternary structure, homohexamer. Mg(2+) is required as a cofactor.

The enzyme catalyses [HPr protein]-L-serine + ATP = [HPr protein]-O-phospho-L-serine + ADP + H(+). It catalyses the reaction [HPr protein]-O-phospho-L-serine + phosphate + H(+) = [HPr protein]-L-serine + diphosphate. In terms of biological role, catalyzes the ATP- as well as the pyrophosphate-dependent phosphorylation of a specific serine residue in HPr, a phosphocarrier protein of the phosphoenolpyruvate-dependent sugar phosphotransferase system (PTS). HprK/P also catalyzes the pyrophosphate-producing, inorganic phosphate-dependent dephosphorylation (phosphorolysis) of seryl-phosphorylated HPr (P-Ser-HPr). The two antagonistic activities of HprK/P are regulated by several intracellular metabolites, which change their concentration in response to the absence or presence of rapidly metabolisable carbon sources (glucose, fructose, etc.) in the growth medium. Also phosphorylates/dephosphorylates the HPr-like catabolite repression protein crh on a specific serine residue. Therefore, by controlling the phosphorylation state of HPr and crh, HPrK/P is a sensor enzyme that plays a major role in the regulation of carbon metabolism and sugar transport: it mediates carbon catabolite repression (CCR), and regulates PTS-catalyzed carbohydrate uptake and inducer exclusion. The protein is Putative HPr kinase/phosphorylase 2 (hprK2) of Oceanobacillus iheyensis (strain DSM 14371 / CIP 107618 / JCM 11309 / KCTC 3954 / HTE831).